The chain runs to 578 residues: Tetratricopeptide repeat protein 39A (578 aa).

TPR repeat units follow at residues 280-313, 470-503, and 511-544; these read AIFL…QQHW, CLVK…EKKI, and PNAL…YKNY.

Belongs to the TTC39 family.

This is Tetratricopeptide repeat protein 39A (Ttc39a) from Mus musculus (Mouse).